A 493-amino-acid chain; its full sequence is Glycerol kinase 2 (493 aa).

Serine 12 is a binding site for ADP. Residues serine 12 and threonine 13 each contribute to the ATP site. Residue serine 12 coordinates sn-glycerol 3-phosphate. Lysine 16 lines the ADP pocket. Sn-glycerol 3-phosphate-binding residues include arginine 82, glutamate 83, tyrosine 134, and aspartate 243. The glycerol site is built by arginine 82, glutamate 83, tyrosine 134, aspartate 243, and glutamine 244. Residues threonine 265 and glycine 308 each contribute to the ADP site. ATP contacts are provided by threonine 265, glycine 308, and asparagine 312. Asparagine 413 contacts ADP.

This sequence belongs to the FGGY kinase family. In terms of assembly, homotetramer and homodimer (in equilibrium).

The enzyme catalyses glycerol + ATP = sn-glycerol 3-phosphate + ADP + H(+). It participates in polyol metabolism; glycerol degradation via glycerol kinase pathway; sn-glycerol 3-phosphate from glycerol: step 1/1. With respect to regulation, activated by phosphorylation and inhibited by fructose 1,6-bisphosphate (FBP). Functionally, key enzyme in the regulation of glycerol uptake and metabolism. Catalyzes the phosphorylation of glycerol to yield sn-glycerol 3-phosphate. This is Glycerol kinase 2 from Clostridium tetani (strain Massachusetts / E88).